Consider the following 128-residue polypeptide: Fruiting body differentiation protein 16 (128 aa).

An N-terminal signal peptide occupies residues 1-19 (MLFSHIVFVALSVFGLVQA).

In terms of biological role, plays a role in the regulation of fruiting body development. This is Fruiting body differentiation protein 16 from Flammulina velutipes (Agaricus velutipes).